A 264-amino-acid chain; its full sequence is Vacuolar protein sorting-associated protein 75 (264 aa).

Position 3 is a phosphoserine (Ser-3). The segment at 223–264 is disordered; it reads LEDEEGESGLSADGDSEDDDGSLGEVDLPLSDEEPSSKKRKV.

Belongs to the nucleosome assembly protein (NAP) family. In terms of assembly, homodimer. Homotetramer. Forms a complex with RTT109; consisting of a VPS75 dimer contacted by two RTT109 subunits. Interacts with RTT109; the interaction is direct. Interacts with ASF1. Interacts with histone H3/H4 heterodimers and heterotetramers via histone H3.

It is found in the nucleus. Histone chaperone which acts as a cofactor stimulating histone H3 acetylation by RTT109. Preferentially stimulates histone H3 'Lys-9' acetylation by RTT109. May also stimulate histone H3 'Lys-56' acetylation by RTT109. Assembles nucleosomes (in vitro). The polypeptide is Vacuolar protein sorting-associated protein 75 (VPS75) (Saccharomyces cerevisiae (strain ATCC 204508 / S288c) (Baker's yeast)).